We begin with the raw amino-acid sequence, 373 residues long: UDP-N-acetylenolpyruvoylglucosamine reductase (373 aa).

The 174-residue stretch at Leu-30–Asp-203 folds into the FAD-binding PCMH-type domain. Arg-180 is an active-site residue. Ser-258 (proton donor) is an active-site residue. The active site involves Glu-356.

The protein belongs to the MurB family. Requires FAD as cofactor.

Its subcellular location is the cytoplasm. It carries out the reaction UDP-N-acetyl-alpha-D-muramate + NADP(+) = UDP-N-acetyl-3-O-(1-carboxyvinyl)-alpha-D-glucosamine + NADPH + H(+). It functions in the pathway cell wall biogenesis; peptidoglycan biosynthesis. Functionally, cell wall formation. The chain is UDP-N-acetylenolpyruvoylglucosamine reductase from Psychrobacter arcticus (strain DSM 17307 / VKM B-2377 / 273-4).